Consider the following 350-residue polypeptide: NADH-quinone oxidoreductase subunit H (350 aa).

A run of 8 helical transmembrane segments spans residues 31–51 (LMLL…LFLI), 102–122 (LLAP…IPFG), 132–152 (LGVL…WMAG), 171–191 (MLSY…MAGS), 205–225 (WFIF…NAEF), 263–283 (FMIG…APFG), 286–306 (FIPS…LYMW), and 322–342 (FAWK…GFGL).

It belongs to the complex I subunit 1 family. NDH-1 is composed of 14 different subunits. Subunits NuoA, H, J, K, L, M, N constitute the membrane sector of the complex.

It is found in the cell membrane. It catalyses the reaction a quinone + NADH + 5 H(+)(in) = a quinol + NAD(+) + 4 H(+)(out). NDH-1 shuttles electrons from NADH, via FMN and iron-sulfur (Fe-S) centers, to quinones in the respiratory chain. The immediate electron acceptor for the enzyme in this species is believed to be ubiquinone. Couples the redox reaction to proton translocation (for every two electrons transferred, four hydrogen ions are translocated across the cytoplasmic membrane), and thus conserves the redox energy in a proton gradient. This subunit may bind ubiquinone. The polypeptide is NADH-quinone oxidoreductase subunit H (Carboxydothermus hydrogenoformans (strain ATCC BAA-161 / DSM 6008 / Z-2901)).